A 299-amino-acid chain; its full sequence is ATP phosphoribosyltransferase (299 aa).

It belongs to the ATP phosphoribosyltransferase family. Long subfamily. Equilibrium between an active dimeric form, an inactive hexameric form and higher aggregates. Interconversion between the various forms is largely reversible and is influenced by the natural substrates and inhibitors of the enzyme. Mg(2+) serves as cofactor.

It is found in the cytoplasm. The catalysed reaction is 1-(5-phospho-beta-D-ribosyl)-ATP + diphosphate = 5-phospho-alpha-D-ribose 1-diphosphate + ATP. Its pathway is amino-acid biosynthesis; L-histidine biosynthesis; L-histidine from 5-phospho-alpha-D-ribose 1-diphosphate: step 1/9. Its activity is regulated as follows. Feedback inhibited by histidine. Its function is as follows. Catalyzes the condensation of ATP and 5-phosphoribose 1-diphosphate to form N'-(5'-phosphoribosyl)-ATP (PR-ATP). Has a crucial role in the pathway because the rate of histidine biosynthesis seems to be controlled primarily by regulation of HisG enzymatic activity. The chain is ATP phosphoribosyltransferase from Blochmanniella pennsylvanica (strain BPEN).